The primary structure comprises 337 residues: Glyceraldehyde-3-phosphate dehydrogenase (337 aa).

Residues 12-13 (RI), D34, R78, and T121 each bind NAD(+). D-glyceraldehyde 3-phosphate is bound by residues 151 to 153 (SCT), T182, R199, 212 to 213 (SG), and R235. C152 functions as the Nucleophile in the catalytic mechanism. NAD(+) is bound at residue N317.

This sequence belongs to the glyceraldehyde-3-phosphate dehydrogenase family. As to quaternary structure, homotetramer.

The protein localises to the cytoplasm. The enzyme catalyses D-glyceraldehyde 3-phosphate + phosphate + NAD(+) = (2R)-3-phospho-glyceroyl phosphate + NADH + H(+). It participates in carbohydrate degradation; glycolysis; pyruvate from D-glyceraldehyde 3-phosphate: step 1/5. In terms of biological role, catalyzes the oxidative phosphorylation of glyceraldehyde 3-phosphate (G3P) to 1,3-bisphosphoglycerate (BPG) using the cofactor NAD. The first reaction step involves the formation of a hemiacetal intermediate between G3P and a cysteine residue, and this hemiacetal intermediate is then oxidized to a thioester, with concomitant reduction of NAD to NADH. The reduced NADH is then exchanged with the second NAD, and the thioester is attacked by a nucleophilic inorganic phosphate to produce BPG. This is Glyceraldehyde-3-phosphate dehydrogenase (gap) from Lactococcus lactis subsp. lactis (strain IL1403) (Streptococcus lactis).